The primary structure comprises 422 residues: Zinc finger protein Gfi-1 (422 aa).

An SNAG domain region spans residues 1–20 (MPRSFLVKSKKAHSYHQPRS). Positions 1 to 109 (MPRSFLVKSK…ASEKSMCPSL (109 aa)) are disordered. Phosphoserine occurs at positions 20 and 56. Residues 140–257 (RPCGALERGA…LLLGGGSYKC (118 aa)) form a required for interaction with RELA region. 6 consecutive C2H2-type zinc fingers follow at residues 255-278 (YKCI…RRSH), 284-306 (FACE…KAVH), 312-334 (FDCK…LLIH), 340-362 (YPCQ…TFIH), 368-390 (HKCQ…SRKH), and 396-419 (FGCD…ETQH).

In terms of assembly, interacts with U2AF1L4. Component of RCOR-GFI-KDM1A-HDAC complexes. Interacts directly with RCOR1, KDM1A and HDAC2. Also interacts with HDAC1. Interacts (via the zinc-finger domain) with ARIH2; the interaction prevents GFI1 ubiquitination and proteasomal degradation. Interacts with PIAS3; the interaction relieves the inhibitory effect of PIAS3 on STAT3-mediated transcriptional activity. Forms a complex with EHMT2 and HDAC1 to promote 'Lys-9' dimethylation of H3 (H3K9Me2) and repress expression of target genes. Interacts directly with EHMT2. Component of the GFI1-AJUBA-HDAC1 repressor complex. Interacts directly with AJUBA (via ITS LIM domains); the interaction results in the HDAC-dependent corepression of a subset of GFI1 target genes and, occurs independently of the SNAG domain. Interacts with SPI1; the interaction inhibits SPI1 transcriptional activity targeted at macrophage-specific genes, repressing macrophage differentiation of myeloid progenitor cells and promoting granulocyte commitment. Interacts with RUNX1T1; the interaction represses HDAC-mediated transcriptional activity. Interacts with RELA; the interaction occurs on liposaccharide (LPS) stimulation and controls RELA DNA binding activity and regulates endotoxin-mediated TOLL-like receptor inflammatory response. Interacts (via the C-terminal zinc fingers) with ZBTB17; the interaction results in the recruitment of GFI1 to the CDKN1A/p21 and CDKN1B promoters and repression of transcription. In terms of processing, ubiquitinated. Ubiquitination and degradation by the proteasome is inhibited by the ubiquitin ligase, ARIH2.

The protein resides in the nucleus. Transcription repressor essential for hematopoiesis. Functions in a cell-context and development-specific manner. Binds to 5'-TAAATCAC[AT]GCA-3' in the promoter region of a large number of genes. Component of several complexes, including the EHMT2-GFI1-HDAC1, AJUBA-GFI1-HDAC1 and RCOR-GFI-KDM1A-HDAC complexes, that suppress, via histone deacetylase (HDAC) recruitment, a number of genes implicated in multilineage blood cell development. Regulates neutrophil differentiation, promotes proliferation of lymphoid cells, and is required for granulocyte development. Inhibits SPI1 transcriptional activity at macrophage-specific genes, repressing macrophage differentiation of myeloid progenitor cells and promoting granulocyte commitment. Mediates, together with U2AF1L4, the alternative splicing of CD45 and controls T-cell receptor signaling. Regulates the endotoxin-mediated Toll-like receptor (TLR) inflammatory response by antagonizing RELA. Cooperates with CBFA2T2 to regulate ITGB1-dependent neurite growth. Controls cell-cycle progression by repressing CDKNIA/p21 transcription in response to TGFB1 via recruitment of GFI1 by ZBTB17 to the CDKNIA/p21 and CDKNIB promoters. Required for the maintenance of inner ear hair cells. In addition to its role in transcription, acts as a substrate adapter for PRMT1 in the DNA damage response: facilitates the recognition of TP53BP1 and MRE11 substrates by PRMT1, promoting their methylation and the DNA damage response. This is Zinc finger protein Gfi-1 (GFI1) from Homo sapiens (Human).